Here is a 188-residue protein sequence, read N- to C-terminus: dTTP/UTP pyrophosphatase (188 aa).

D67 functions as the Proton acceptor in the catalytic mechanism.

The protein belongs to the Maf family. YhdE subfamily. Requires a divalent metal cation as cofactor.

Its subcellular location is the cytoplasm. It catalyses the reaction dTTP + H2O = dTMP + diphosphate + H(+). The catalysed reaction is UTP + H2O = UMP + diphosphate + H(+). Nucleoside triphosphate pyrophosphatase that hydrolyzes dTTP and UTP. May have a dual role in cell division arrest and in preventing the incorporation of modified nucleotides into cellular nucleic acids. This Thermococcus kodakarensis (strain ATCC BAA-918 / JCM 12380 / KOD1) (Pyrococcus kodakaraensis (strain KOD1)) protein is dTTP/UTP pyrophosphatase.